The sequence spans 192 residues: UPF0312 protein Ent638_1570 (192 aa).

The signal sequence occupies residues 1-22; it reads MKKRLLGIALGSLLFTTGSAVA.

It belongs to the UPF0312 family. Type 1 subfamily.

Its subcellular location is the periplasm. This Enterobacter sp. (strain 638) protein is UPF0312 protein Ent638_1570.